The sequence spans 472 residues: NALCN channel auxiliary factor 2 (472 aa).

The chain crosses the membrane as a helical span at residues 47–67 (LASLLFFTVLLADHLWLCAGA). The tract at residues 77–114 (AMRPPWGAGRERQPVPPRAVLPLPPPPPGEPSAPPGTC) is disordered. Residues 90 to 110 (PVPPRAVLPLPPPPPGEPSAP) show a composition bias toward pro residues. N120 and N193 each carry an N-linked (GlcNAc...) asparagine glycan. Residues 433–453 (LCVLVLMLLHTVVSFSSNQGG) traverse the membrane as a helical segment.

The protein belongs to the NALF family.

It localises to the membrane. In terms of biological role, probable component of the NALCN channel complex, a channel that regulates the resting membrane potential and controls neuronal excitability. The polypeptide is NALCN channel auxiliary factor 2 (Homo sapiens (Human)).